The following is a 254-amino-acid chain: MTPGIRPLVAGNWKMNGKGESLTELRAIAAGLSSDLGRKLDAVICVPATLLSRAAETLEGETVGLGGQDAHFKTSGAHTGDISPEMLKEAGATHVILGHSERRTDHHESNKLICAKTEAAWAAGLVAIVCVGETASERKAERALDVIGDQLSGSLPDGVTAENTIIAYEPVWAIGTGLTPTVQDVRAAHAFMREQLIERFGAKGAHLRLLYGGSVKPSNAAELLGVADVDGALVGGASLKAADFLAICETYRNL.

Substrate is bound at residue 12–14 (NWK). His99 functions as the Electrophile in the catalytic mechanism. The active-site Proton acceptor is the Glu169. Residues Gly175, Ser214, and 235 to 236 (GG) contribute to the substrate site.

It belongs to the triosephosphate isomerase family. In terms of assembly, homodimer.

It localises to the cytoplasm. The catalysed reaction is D-glyceraldehyde 3-phosphate = dihydroxyacetone phosphate. Its pathway is carbohydrate biosynthesis; gluconeogenesis. The protein operates within carbohydrate degradation; glycolysis; D-glyceraldehyde 3-phosphate from glycerone phosphate: step 1/1. Involved in the gluconeogenesis. Catalyzes stereospecifically the conversion of dihydroxyacetone phosphate (DHAP) to D-glyceraldehyde-3-phosphate (G3P). The sequence is that of Triosephosphate isomerase from Brucella abortus biovar 1 (strain 9-941).